The chain runs to 271 residues: 3-methyl-2-oxobutanoate hydroxymethyltransferase (271 aa).

Residues D51 and D90 each coordinate Mg(2+). Residues 51–52 (DS), D90, and K118 each bind 3-methyl-2-oxobutanoate. E120 contacts Mg(2+). E186 (proton acceptor) is an active-site residue.

The protein belongs to the PanB family. As to quaternary structure, homodecamer; pentamer of dimers. Requires Mg(2+) as cofactor.

The protein localises to the cytoplasm. The catalysed reaction is 3-methyl-2-oxobutanoate + (6R)-5,10-methylene-5,6,7,8-tetrahydrofolate + H2O = 2-dehydropantoate + (6S)-5,6,7,8-tetrahydrofolate. It functions in the pathway cofactor biosynthesis; (R)-pantothenate biosynthesis; (R)-pantoate from 3-methyl-2-oxobutanoate: step 1/2. In terms of biological role, catalyzes the reversible reaction in which hydroxymethyl group from 5,10-methylenetetrahydrofolate is transferred onto alpha-ketoisovalerate to form ketopantoate. This chain is 3-methyl-2-oxobutanoate hydroxymethyltransferase, found in Xanthomonas oryzae pv. oryzae (strain PXO99A).